A 1439-amino-acid polypeptide reads, in one-letter code: Probable histone acetyltransferase HAC-like 2 (1439 aa).

Disordered stretches follow at residues 1 to 43 and 313 to 335; these read MKQG…ASAD and YGISPNKPLQRHVNPSTRSTPTP. The span at 325 to 335 shows a compositional bias: polar residues; it reads VNPSTRSTPTP. The TAZ-type zinc-finger motif lies at 607 to 687; it reads ENTKQYHAQA…NEHCHVCCKA (81 aa). A PHD-type; degenerate zinc finger spans residues 827-933; that stretch reads KIHCHVQQET…EYTCFKCYIE (107 aa). A CBP/p300-type HAT domain is found at 948–1383; sequence VRGAKDLPRT…MLYHLHNPTG (436 aa). The stretch at 964–989 forms a coiled coil; sequence EERLFKRLREERQERANKLKTSLDEV. Residues 1071 to 1073, 1090 to 1091, and Trp-1146 each bind acetyl-CoA; these read LDS and RT. The ZZ-type zinc finger occupies 1265 to 1328; it reads HLQYSCSHCC…ILHPVEIVGV (64 aa). Zn(2+) is bound by residues Cys-1270, Cys-1273, Cys-1285, Cys-1288, Cys-1294, Cys-1297, His-1310, and His-1318.

It localises to the nucleus. It carries out the reaction L-lysyl-[protein] + acetyl-CoA = N(6)-acetyl-L-lysyl-[protein] + CoA + H(+). Functionally, acetyltransferase enzyme. Acetylates histones, giving a specific tag for transcriptional activation. In Oryza sativa subsp. japonica (Rice), this protein is Probable histone acetyltransferase HAC-like 2.